The chain runs to 340 residues: S-adenosylmethionine:tRNA ribosyltransferase-isomerase (340 aa).

The protein belongs to the QueA family. As to quaternary structure, monomer.

It localises to the cytoplasm. The catalysed reaction is 7-aminomethyl-7-carbaguanosine(34) in tRNA + S-adenosyl-L-methionine = epoxyqueuosine(34) in tRNA + adenine + L-methionine + 2 H(+). The protein operates within tRNA modification; tRNA-queuosine biosynthesis. Transfers and isomerizes the ribose moiety from AdoMet to the 7-aminomethyl group of 7-deazaguanine (preQ1-tRNA) to give epoxyqueuosine (oQ-tRNA). The polypeptide is S-adenosylmethionine:tRNA ribosyltransferase-isomerase (Chlorobaculum parvum (strain DSM 263 / NCIMB 8327) (Chlorobium vibrioforme subsp. thiosulfatophilum)).